A 403-amino-acid chain; its full sequence is MKIKQLPAIFEPARPVLQKIEEAGYEAYFVGGCVRDTILHDEIHDIDIATSAYPSEIKAIFNHTVDTGIEHGTVMILDHGTGYETTTFRTESGYQDYRRPDKVTFVRSLSEDLQRRDFTINALALREDGEVIDLFDGLEDLQKHLIKAVGNPNERFHEDALRMMRAVRFASKLDFVIDTATLKGIKENAPLLEKIAVERIRVELEKLLLGQNPVAGLKDFIATGLYQYCPGLENAQAALSALLILNQWHLENEAQLWSVLGLQLQLDQKEIGKFLKKWKTANDLIAQVKKVVPAVQAIRQRALTPTLMFNTGETALHDANQVAKLYGWAIDDEELQKAYQKLPIKNAKELAIDGRVLITKAGVKPGPLMGKILQQLTLAVVNGEIANNATVLLEKVEEITKEG.

Residues Gly32 and Arg35 each coordinate ATP. 2 residues coordinate CTP: Gly32 and Arg35. Positions 45 and 47 each coordinate Mg(2+). The ATP site is built by Arg116, Asp159, Arg162, Arg165, and Arg168. Arg116, Asp159, Arg162, Arg165, and Arg168 together coordinate CTP.

Belongs to the tRNA nucleotidyltransferase/poly(A) polymerase family. Bacterial CCA-adding enzyme type 3 subfamily. As to quaternary structure, homodimer. It depends on Mg(2+) as a cofactor.

It catalyses the reaction a tRNA precursor + 2 CTP + ATP = a tRNA with a 3' CCA end + 3 diphosphate. The enzyme catalyses a tRNA with a 3' CCA end + 2 CTP + ATP = a tRNA with a 3' CCACCA end + 3 diphosphate. Its function is as follows. Catalyzes the addition and repair of the essential 3'-terminal CCA sequence in tRNAs without using a nucleic acid template. Adds these three nucleotides in the order of C, C, and A to the tRNA nucleotide-73, using CTP and ATP as substrates and producing inorganic pyrophosphate. tRNA 3'-terminal CCA addition is required both for tRNA processing and repair. Also involved in tRNA surveillance by mediating tandem CCA addition to generate a CCACCA at the 3' terminus of unstable tRNAs. While stable tRNAs receive only 3'-terminal CCA, unstable tRNAs are marked with CCACCA and rapidly degraded. The polypeptide is CCA-adding enzyme (Limosilactobacillus reuteri (strain DSM 20016) (Lactobacillus reuteri)).